We begin with the raw amino-acid sequence, 240 residues long: tRNA1(Val) (adenine(37)-N6)-methyltransferase (240 aa).

The protein belongs to the methyltransferase superfamily. tRNA (adenine-N(6)-)-methyltransferase family.

The protein resides in the cytoplasm. It catalyses the reaction adenosine(37) in tRNA1(Val) + S-adenosyl-L-methionine = N(6)-methyladenosine(37) in tRNA1(Val) + S-adenosyl-L-homocysteine + H(+). Functionally, specifically methylates the adenine in position 37 of tRNA(1)(Val) (anticodon cmo5UAC). The chain is tRNA1(Val) (adenine(37)-N6)-methyltransferase from Christiangramia forsetii (strain DSM 17595 / CGMCC 1.15422 / KT0803) (Gramella forsetii).